Reading from the N-terminus, the 381-residue chain is Putative F-box protein At3g17500 (381 aa).

The F-box domain maps to 1 to 45 (MMSNLPLDLVEEILSRVPATSLKRLRSTCKSWNNCYKDQRFTEKH).

This is Putative F-box protein At3g17500 from Arabidopsis thaliana (Mouse-ear cress).